We begin with the raw amino-acid sequence, 120 residues long: Large ribosomal subunit protein uL18 (120 aa).

Belongs to the universal ribosomal protein uL18 family. In terms of assembly, part of the 50S ribosomal subunit; part of the 5S rRNA/L5/L18/L25 subcomplex. Contacts the 5S and 23S rRNAs.

Its function is as follows. This is one of the proteins that bind and probably mediate the attachment of the 5S RNA into the large ribosomal subunit, where it forms part of the central protuberance. The polypeptide is Large ribosomal subunit protein uL18 (Clostridium botulinum (strain Eklund 17B / Type B)).